A 587-amino-acid polypeptide reads, in one-letter code: 5-aminolevulinate synthase, erythroid-specific, mitochondrial (587 aa).

Residues 1 to 49 (MVTAAMLLQRCPVLIRSPTGLLGKMIKTHQFLFGIGRCPILATQGPSFS) constitute a mitochondrion transit peptide. Arg-163 is a binding site for succinyl-CoA. Pyridoxal 5'-phosphate contacts are provided by Cys-258 and Phe-259. Succinyl-CoA-binding residues include Ser-280 and Lys-299. The pyridoxal 5'-phosphate site is built by Ser-332, His-360, and Thr-388. Lys-391 is an active-site residue. N6-(pyridoxal phosphate)lysine is present on Lys-391. 2 residues coordinate pyridoxal 5'-phosphate: Thr-420 and Thr-421. A succinyl-CoA-binding site is contributed by Thr-508.

The protein belongs to the class-II pyridoxal-phosphate-dependent aminotransferase family. In terms of assembly, homodimer. Interacts with SUCLA2. Pyridoxal 5'-phosphate is required as a cofactor.

Its subcellular location is the mitochondrion inner membrane. It carries out the reaction succinyl-CoA + glycine + H(+) = 5-aminolevulinate + CO2 + CoA. Its pathway is porphyrin-containing compound metabolism; protoporphyrin-IX biosynthesis; 5-aminolevulinate from glycine: step 1/1. Its function is as follows. Catalyzes the pyridoxal 5'-phosphate (PLP)-dependent condensation of succinyl-CoA and glycine to form aminolevulinic acid (ALA), with CoA and CO2 as by-products. Contributes significantly to heme formation during erythropoiesis. This chain is 5-aminolevulinate synthase, erythroid-specific, mitochondrial (ALAS2), found in Bos taurus (Bovine).